Here is a 489-residue protein sequence, read N- to C-terminus: Cytochrome P450 monooxygenase tazI (489 aa).

A heme-binding site is contributed by Cys-433.

It belongs to the cytochrome P450 family. Heme is required as a cofactor.

It participates in secondary metabolite biosynthesis. Cytochrome P450 monooxygenase; part of the gene cluster that mediates the biosynthesis of azaterrilone A and other azaphilones, a class of fungal metabolites characterized by a highly oxygenated pyrano-quinone bicyclic core and exhibiting a broad range of bioactivities. The first step of the pathway begins with the non-reducing polyketide synthase tazA that assembles one acetyl-CoA starter unit, five malonyl-CoA units, and catalyzes a series of Claisen condensations, methylation, PT-mediated cyclization, and finally releases the first hexaketide precursor through the R-domain. The tazA product then undergoes reduction on its terminal ketone and the following pyran-ring formation by yet undetermined enzyme(s). Dehydration and enoyl reduction, possibly involving the trans-enoyl reductase tazE leads to the next intermediate. TazD is predicted as an acetyltransferase and might catalyze the acetylation steps leading to the synthesis of azaterrilone A. Azaterrilone A is not the final product of the taz pathway and both the highly reducing polyketide synthase tazB and the dual enzyme tazHJ catalyze late steps of the pathway, leading to the production of the 2 final stereoisomers that contain additional polyketide modification whose structures have still to be determined. The chain is Cytochrome P450 monooxygenase tazI from Aspergillus terreus (strain NIH 2624 / FGSC A1156).